The sequence spans 895 residues: Collagen alpha-1(I) chain (895 aa).

Positions 1 to 895 (GPMGPSGPRG…PGPIGPPGPR (895 aa)) are disordered. Over residues 20 to 39 (PQGFQGPPGEPGEPGASGPM) the composition is skewed to low complexity. Residues 51–65 (NGDDGEAGKPGRPGE) show a composition bias toward basic and acidic residues. S90 is modified (phosphoserine). Composition is skewed to low complexity over residues 98 to 114 (DAGP…PGEN) and 137 to 150 (PAGA…TGAA). Over residues 152–164 (PPGPTGPAGPPGF) the composition is skewed to pro residues. 6 stretches are compositionally biased toward low complexity: residues 198-237 (AGAA…RGPS), 302-336 (ERGF…PGEA), 348-374 (KGIT…QDGR), 383-399 (ARGQ…KGAA), 553-564 (TGPSGPAGPTGA), and 575-593 (AGFA…KGDA). Position 556 is a phosphoserine (S556). Pro residues predominate over residues 595–607 (PPGPAGPAGPPGP). Composition is skewed to low complexity over residues 608–635 (IGSV…AGRV), 660–669 (ETGPAGRPGE), and 679–703 (AGEK…QGIA). Residues 741 to 751 (PPGPVGPPGIA) show a composition bias toward pro residues. Over residues 753–768 (PPGESGREGSPGAEGS) the composition is skewed to low complexity. A compositionally biased stretch (pro residues) spans 787-802 (AGPPGAPGAPGAPGPV). 2 stretches are compositionally biased toward low complexity: residues 823–838 (IGPV…QGPR) and 853–886 (PGEQ…NGIP).

This sequence belongs to the fibrillar collagen family. Trimers of one alpha 2(I) and two alpha 1(I) chains. In terms of processing, prolines at the third position of the tripeptide repeating unit (G-X-Y) are hydroxylated in some or all of the chains. In terms of tissue distribution, forms the fibrils of tendon, ligaments and bones. In bones, the fibrils are mineralized with calcium hydroxyapatite.

The protein localises to the secreted. It localises to the extracellular space. The protein resides in the extracellular matrix. Its function is as follows. Type I collagen is a member of group I collagen (fibrillar forming collagen). The polypeptide is Collagen alpha-1(I) chain (Equus sp).